A 584-amino-acid chain; its full sequence is Putative sel1-like repeat-containing protein L18 (584 aa).

6 Sel1-like repeats span residues 132–167 (SMAQ…DQNN), 168–203 (KYGL…CQNF), 204–237 (SKAQ…NQNH), 238–273 (SSAQ…SQGL), 274–309 (NSAK…YDDG), and 316–351 (EVAM…NTKN).

The polypeptide is Putative sel1-like repeat-containing protein L18 (Acanthamoeba polyphaga (Amoeba)).